The following is a 124-amino-acid chain: Glycine cleavage system H protein (124 aa).

In terms of domain architecture, Lipoyl-binding spans valine 19 to glutamate 101. N6-lipoyllysine is present on lysine 60.

This sequence belongs to the GcvH family. In terms of assembly, the glycine cleavage system is composed of four proteins: P, T, L and H. (R)-lipoate serves as cofactor.

The glycine cleavage system catalyzes the degradation of glycine. The H protein shuttles the methylamine group of glycine from the P protein to the T protein. In Thermotoga maritima (strain ATCC 43589 / DSM 3109 / JCM 10099 / NBRC 100826 / MSB8), this protein is Glycine cleavage system H protein.